The sequence spans 399 residues: Phosphoglycerate kinase (399 aa).

Residues 22 to 24 (DFN), R38, 61 to 64 (HLGR), R120, and R153 each bind substrate. ATP contacts are provided by residues K204, E326, and 352–355 (GGDT).

Belongs to the phosphoglycerate kinase family. As to quaternary structure, monomer.

The protein resides in the cytoplasm. It catalyses the reaction (2R)-3-phosphoglycerate + ATP = (2R)-3-phospho-glyceroyl phosphate + ADP. It participates in carbohydrate degradation; glycolysis; pyruvate from D-glyceraldehyde 3-phosphate: step 2/5. In Pelobacter propionicus (strain DSM 2379 / NBRC 103807 / OttBd1), this protein is Phosphoglycerate kinase.